We begin with the raw amino-acid sequence, 147 residues long: Allograft inflammatory factor 1 (147 aa).

Ser-2 bears the N-acetylserine mark. Residue Lys-11 is modified to N6-acetyllysine. Ser-39 carries the phosphoserine modification. One can recognise an EF-hand 1 domain in the interval 45 to 80; the sequence is SKLEAFKTKYMEFDLNGNGDIDIMSLKRMLEKLGVP. Ca(2+)-binding residues include Asp-58, Asn-60, Asn-62, Asp-64, Glu-98, Thr-100, and Asp-105. The 35-residue stretch at 81–115 folds into the EF-hand 2; degenerate domain; that stretch reads KTHLELKKLIREVSSGSEETFSYSDFLRMMLGKRS. The interval 127–147 is disordered; that stretch reads KNKEHQKPTGPPAKKAISELP.

As to quaternary structure, homodimer (Potential). Monomer. Interacts with LCP1. As to expression, cardiac allograft, spleen and testis. Expressed by inflammatory cells (macrophages and neutrophils).

The protein localises to the cytoplasm. It is found in the cytoskeleton. The protein resides in the cell projection. Its subcellular location is the ruffle membrane. It localises to the phagocytic cup. Functionally, actin-binding protein that enhances membrane ruffling and RAC activation. Enhances the actin-bundling activity of LCP1. Binds calcium. Plays a role in RAC signaling and in phagocytosis. May play an role in macrophage activation and function. Promotes the proliferation of vascular smooth muscle cells and of T-lymphocytes. Enhances lymphocyte migration. Plays a role in vascular inflammation. This Rattus norvegicus (Rat) protein is Allograft inflammatory factor 1 (Aif1).